Consider the following 452-residue polypeptide: Bifunctional protein GlmU (452 aa).

The tract at residues 1-226 (MSLSVVILAA…ATEVEGVNTR (226 aa)) is pyrophosphorylase. Residues 8 to 11 (LAAG), Lys-22, Gln-73, 78 to 79 (GT), 100 to 102 (YGD), Gly-137, Glu-151, Asn-166, and Asn-224 each bind UDP-N-acetyl-alpha-D-glucosamine. Asp-102 provides a ligand contact to Mg(2+). Residue Asn-224 coordinates Mg(2+). Residues 227 to 247 (LQLANLERAYQLKKATELLLS) form a linker region. Residues 248–452 (GVMLRDPNRF…INNWKRPTKK (205 aa)) are N-acetyltransferase. 2 residues coordinate UDP-N-acetyl-alpha-D-glucosamine: Arg-330 and Lys-348. The active-site Proton acceptor is the His-360. UDP-N-acetyl-alpha-D-glucosamine is bound by residues Tyr-363 and Asn-374. Residues Ala-377, 383-384 (NY), Ser-402, Ala-420, and Arg-437 contribute to the acetyl-CoA site.

In the N-terminal section; belongs to the N-acetylglucosamine-1-phosphate uridyltransferase family. This sequence in the C-terminal section; belongs to the transferase hexapeptide repeat family. As to quaternary structure, homotrimer. It depends on Mg(2+) as a cofactor.

The protein localises to the cytoplasm. The catalysed reaction is alpha-D-glucosamine 1-phosphate + acetyl-CoA = N-acetyl-alpha-D-glucosamine 1-phosphate + CoA + H(+). The enzyme catalyses N-acetyl-alpha-D-glucosamine 1-phosphate + UTP + H(+) = UDP-N-acetyl-alpha-D-glucosamine + diphosphate. The protein operates within nucleotide-sugar biosynthesis; UDP-N-acetyl-alpha-D-glucosamine biosynthesis; N-acetyl-alpha-D-glucosamine 1-phosphate from alpha-D-glucosamine 6-phosphate (route II): step 2/2. It participates in nucleotide-sugar biosynthesis; UDP-N-acetyl-alpha-D-glucosamine biosynthesis; UDP-N-acetyl-alpha-D-glucosamine from N-acetyl-alpha-D-glucosamine 1-phosphate: step 1/1. It functions in the pathway bacterial outer membrane biogenesis; LPS lipid A biosynthesis. Its function is as follows. Catalyzes the last two sequential reactions in the de novo biosynthetic pathway for UDP-N-acetylglucosamine (UDP-GlcNAc). The C-terminal domain catalyzes the transfer of acetyl group from acetyl coenzyme A to glucosamine-1-phosphate (GlcN-1-P) to produce N-acetylglucosamine-1-phosphate (GlcNAc-1-P), which is converted into UDP-GlcNAc by the transfer of uridine 5-monophosphate (from uridine 5-triphosphate), a reaction catalyzed by the N-terminal domain. This Psychromonas ingrahamii (strain DSM 17664 / CCUG 51855 / 37) protein is Bifunctional protein GlmU.